Here is a 217-residue protein sequence, read N- to C-terminus: Adenylate kinase (217 aa).

An ATP-binding site is contributed by 10-15; it reads GAGKGT. Residues 30-59 are NMP; sequence STGDMLREAVAKGTELGKKAKEYMDKGELV. AMP is bound by residues Thr31, Arg36, 57-59, 85-88, and Gln92; these read ELV and GFPR. Residues 126 to 163 are LID; the sequence is YRRTCRNCGAVYHLIYAPPKEDNKCDKCGGELYQRDDD. An ATP-binding site is contributed by Arg127. Residues Cys130 and Cys133 each coordinate Zn(2+). 136–137 lines the ATP pocket; it reads VY. Zn(2+) contacts are provided by Cys150 and Cys153. AMP-binding residues include Arg160 and Arg171. Lys199 serves as a coordination point for ATP.

Belongs to the adenylate kinase family. Monomer.

It localises to the cytoplasm. It carries out the reaction AMP + ATP = 2 ADP. It functions in the pathway purine metabolism; AMP biosynthesis via salvage pathway; AMP from ADP: step 1/1. Catalyzes the reversible transfer of the terminal phosphate group between ATP and AMP. Plays an important role in cellular energy homeostasis and in adenine nucleotide metabolism. The sequence is that of Adenylate kinase from Archaeoglobus fulgidus (strain ATCC 49558 / DSM 4304 / JCM 9628 / NBRC 100126 / VC-16).